We begin with the raw amino-acid sequence, 68 residues long: Disintegrin EMS11A (68 aa).

Residues 1 to 65 form the Disintegrin domain; that stretch reads NSAHPCCDPV…DCPRNRYKGK (65 aa). 4 cysteine pairs are disulfide-bonded: cysteine 6/cysteine 29, cysteine 20/cysteine 26, cysteine 25/cysteine 50, and cysteine 38/cysteine 57. The Cell attachment site; atypical (MLD) motif lies at 42–44; the sequence is MLD.

Belongs to the disintegrin family. Dimeric disintegrin subfamily. Heterodimer; disulfide-linked. Expressed by the venom gland.

It localises to the secreted. Poor inhibitor of platelet aggregation. The disintegrin inhibits the adhesion of both the alpha-4/beta-1 (ITGA4/ITGB1) and the alpha-5/beta-1 (ITGA5/ITGB1) integrins to VCAM-1 and fibronectin respectively with almost the same degree of specificity. Inhibition on alpha-IIb/beta-3 (ITGA2B/ITGB3) is low. This chain is Disintegrin EMS11A, found in Echis multisquamatus (Central Asian sand viper).